Here is a 213-residue protein sequence, read N- to C-terminus: Orotate phosphoribosyltransferase (213 aa).

Residue Lys-26 coordinates 5-phospho-alpha-D-ribose 1-diphosphate. 34–35 is a binding site for orotate; it reads FF. Residues 72 to 73, Arg-99, Lys-100, Lys-103, His-105, and 124 to 132 each bind 5-phospho-alpha-D-ribose 1-diphosphate; these read YK and DDVITAGTA. Residues Thr-128 and Arg-156 each coordinate orotate.

It belongs to the purine/pyrimidine phosphoribosyltransferase family. PyrE subfamily. Homodimer. It depends on Mg(2+) as a cofactor.

The catalysed reaction is orotidine 5'-phosphate + diphosphate = orotate + 5-phospho-alpha-D-ribose 1-diphosphate. It functions in the pathway pyrimidine metabolism; UMP biosynthesis via de novo pathway; UMP from orotate: step 1/2. Catalyzes the transfer of a ribosyl phosphate group from 5-phosphoribose 1-diphosphate to orotate, leading to the formation of orotidine monophosphate (OMP). This Pseudomonas putida (strain GB-1) protein is Orotate phosphoribosyltransferase.